The sequence spans 181 residues: Protein Ves (181 aa).

It belongs to the Ves family.

In Cronobacter sakazakii (strain ATCC BAA-894) (Enterobacter sakazakii), this protein is Protein Ves.